The following is a 1086-amino-acid chain: NAD(P) transhydrogenase, mitochondrial (1086 aa).

The transit peptide at 1-43 (MANLLKTVVTGCSCPFLSNLGSCKVLPGKKNFLRAFHTHRILW) directs the protein to the mitochondrion. The Mitochondrial matrix segment spans residues 44-474 (CKAPVKPGIP…TITPFRKTMT (431 aa)). Lys-70 is subject to N6-acetyllysine. Lys-117 carries the post-translational modification N6-succinyllysine. 182–184 (RVT) is an NAD(+) binding site. Position 224 is an N6-succinyllysine (Lys-224). NAD(+) contacts are provided by residues Val-237, 257–259 (DTR), and Gly-287. At Lys-294 the chain carries N6-succinyllysine. NAD(+)-binding residues include Glu-300 and Leu-319. Lys-331 bears the N6-succinyllysine mark. Lys-397 carries the N6-acetyllysine modification. Transmembrane regions (helical) follow at residues 475–493 (SASV…GIAA), 501–521 (MVTT…GVTP), 527–546 (LMSV…LVLM), and 558–578 (GLAA…FLVT). Residues 579–595 (QRMLDMFKRPTDPPEYN) are Mitochondrial matrix-facing. Helical transmembrane passes span 596 to 616 (YLYL…LYSG), 622 to 642 (IMYL…STQG), 646 to 666 (LGNA…LGGL), 672 to 691 (LLAQ…LTIA), and 702 to 722 (LVAA…IAEY). Topologically, residues 723–739 (IIEYPHFATDAAANLTK) are cytoplasmic. A run of 5 helical transmembrane segments spans residues 740 to 760 (IVAY…LVAY), 778 to 797 (HLLN…PFMM), 801 to 819 (FTTG…AVMG), 833 to 853 (VVIT…GFLL), and 857 to 879 (LLTI…MCVA). Over 880–1086 (MNRSLANVIL…QAKVRESYQK (207 aa)) the chain is Mitochondrial matrix. NADP(+) contacts are provided by residues Tyr-933, 965-970 (VAGRMP), 1007-1011 (GANDT), 1026-1027 (GM), 1042-1049 (KRSLGVGY), and 1068-1069 (DA). N6-succinyllysine is present on Lys-1079.

In the N-terminal section; belongs to the AlaDH/PNT family. This sequence in the C-terminal section; belongs to the PNT beta subunit family. Homodimer.

Its subcellular location is the mitochondrion inner membrane. The catalysed reaction is NAD(+) + NADPH + H(+)(in) = NADH + NADP(+) + H(+)(out). Functionally, the transhydrogenation between NADH and NADP is coupled to respiration and ATP hydrolysis and functions as a proton pump across the membrane. May play a role in reactive oxygen species (ROS) detoxification in the adrenal gland. The protein is NAD(P) transhydrogenase, mitochondrial (NNT) of Ovis aries (Sheep).